A 164-amino-acid polypeptide reads, in one-letter code: Small ribosomal subunit protein uS5 (164 aa).

One can recognise an S5 DRBM domain in the interval 10–73; it reads LEERVVAINR…EAAKKNMIEV (64 aa).

This sequence belongs to the universal ribosomal protein uS5 family. In terms of assembly, part of the 30S ribosomal subunit. Contacts proteins S4 and S8.

Its function is as follows. With S4 and S12 plays an important role in translational accuracy. Functionally, located at the back of the 30S subunit body where it stabilizes the conformation of the head with respect to the body. The protein is Small ribosomal subunit protein uS5 of Streptococcus pyogenes serotype M1.